The following is a 462-amino-acid chain: 2-amino-5-chloromuconic acid deaminase (462 aa).

Active-site charge relay system residues include lysine 79 and serine 156. Serine 180 functions as the Acyl-ester intermediate in the catalytic mechanism.

Belongs to the amidase family.

The catalysed reaction is (2Z,4E)-2-aminomuconate + H2O = (3E)-2-oxohex-3-enedioate + NH4(+). The protein operates within xenobiotic degradation; nitrobenzene degradation. It functions in the pathway xenobiotic degradation; 4-chloronitrobenzene degradation. Its function is as follows. Involved in the biodegradation of nitroaromatic and chlorinated nitroaromatic compounds. Catalyzes the conversion of 2-amino-5-chloromuconic acid into 2-hydroxy-5-chloromuconic acid and ammonia. Also able to catalyze the transformation of 2-aminomuconic acid into 2-hydroxymuconic acid. This is 2-amino-5-chloromuconic acid deaminase from Comamonas testosteroni (Pseudomonas testosteroni).